We begin with the raw amino-acid sequence, 264 residues long: uncharacterized protein (264 aa).

Positions Ala19 to Asn45 form a coiled coil.

This is an uncharacterized protein from Acanthamoeba polyphaga mimivirus (APMV).